A 354-amino-acid chain; its full sequence is Dihydroorotate dehydrogenase (quinone) (354 aa).

FMN is bound by residues 61–65 (AGYDK) and A85. K65 is a binding site for substrate. A substrate-binding site is contributed by 110–114 (NRFGF). The FMN site is built by N139 and N170. N170 is a binding site for substrate. S173 functions as the Nucleophile in the catalytic mechanism. N175 provides a ligand contact to substrate. FMN-binding residues include K211 and T239. 240–241 (NT) provides a ligand contact to substrate. Residues G261, G290, and 311-312 (YT) contribute to the FMN site.

Belongs to the dihydroorotate dehydrogenase family. Type 2 subfamily. As to quaternary structure, monomer. FMN serves as cofactor.

The protein localises to the cell membrane. It carries out the reaction (S)-dihydroorotate + a quinone = orotate + a quinol. It participates in pyrimidine metabolism; UMP biosynthesis via de novo pathway; orotate from (S)-dihydroorotate (quinone route): step 1/1. In terms of biological role, catalyzes the conversion of dihydroorotate to orotate with quinone as electron acceptor. The polypeptide is Dihydroorotate dehydrogenase (quinone) (Cereibacter sphaeroides (strain KD131 / KCTC 12085) (Rhodobacter sphaeroides)).